The chain runs to 335 residues: NmrA-like family domain-containing oxidoreductase lnbB (335 aa).

NADP(+)-binding positions include 14–18 (GTGNQ), 41–45 (RHPDS), 62–63 (DG), 83–85 (TNS), Lys-142, and 166–169 (YYEQ).

This sequence belongs to the NmrA-type oxidoreductase family.

The protein operates within secondary metabolite biosynthesis. In terms of biological role, nmrA-like family domain-containing oxidoreductase; part of the lnb gene cluster that mediates the biosynthesis of diastereomeric piperazines. Lna and lnb clusters encode sets of enzymes that produce overlapping sets of previously undescribed metabolites such as piperazinomycin-like metabolites or morpholine. The lna and lnb biosynthetic pathways appear to be part of a signaling network that controls the formation of sclerotia, a resilient overwintering structure. One primary function of the non-canonical nonribosomal peptide synthetases lnaA and lnbA consists in the reduction of L-tyrosine. The presence in the clusters of tailoring enzymes such as the oxidoreductases lnaB, lnbB, lnaE or lnbE, as well as of the cytochrome P450 monooxygenases lnaC, lnaD, or lnbC, might explain formation of various diastereomeric piperazines. The polypeptide is NmrA-like family domain-containing oxidoreductase lnbB (Aspergillus flavus (strain ATCC 200026 / FGSC A1120 / IAM 13836 / NRRL 3357 / JCM 12722 / SRRC 167)).